The chain runs to 430 residues: Serine--tRNA ligase (430 aa).

Residue 237 to 239 (TAE) participates in L-serine binding. 268–270 (RSE) contributes to the ATP binding site. E291 serves as a coordination point for L-serine. 355–358 (EISS) contacts ATP. S391 lines the L-serine pocket.

It belongs to the class-II aminoacyl-tRNA synthetase family. Type-1 seryl-tRNA synthetase subfamily. Homodimer. The tRNA molecule binds across the dimer.

It localises to the cytoplasm. It carries out the reaction tRNA(Ser) + L-serine + ATP = L-seryl-tRNA(Ser) + AMP + diphosphate + H(+). The enzyme catalyses tRNA(Sec) + L-serine + ATP = L-seryl-tRNA(Sec) + AMP + diphosphate + H(+). It functions in the pathway aminoacyl-tRNA biosynthesis; selenocysteinyl-tRNA(Sec) biosynthesis; L-seryl-tRNA(Sec) from L-serine and tRNA(Sec): step 1/1. In terms of biological role, catalyzes the attachment of serine to tRNA(Ser). Is also able to aminoacylate tRNA(Sec) with serine, to form the misacylated tRNA L-seryl-tRNA(Sec), which will be further converted into selenocysteinyl-tRNA(Sec). This Escherichia fergusonii (strain ATCC 35469 / DSM 13698 / CCUG 18766 / IAM 14443 / JCM 21226 / LMG 7866 / NBRC 102419 / NCTC 12128 / CDC 0568-73) protein is Serine--tRNA ligase.